Here is a 478-residue protein sequence, read N- to C-terminus: Transposase for insertion sequence element IS231C (478 aa).

This sequence belongs to the transposase 11 family.

Involved in the transposition of the insertion sequence. The chain is Transposase for insertion sequence element IS231C from Bacillus thuringiensis subsp. berliner.